A 127-amino-acid polypeptide reads, in one-letter code: Large ribosomal subunit protein bL20 (127 aa).

It belongs to the bacterial ribosomal protein bL20 family.

Its function is as follows. Binds directly to 23S ribosomal RNA and is necessary for the in vitro assembly process of the 50S ribosomal subunit. It is not involved in the protein synthesizing functions of that subunit. The polypeptide is Large ribosomal subunit protein bL20 (Bifidobacterium adolescentis (strain ATCC 15703 / DSM 20083 / NCTC 11814 / E194a)).